Here is a 68-residue protein sequence, read N- to C-terminus: Large ribosomal subunit protein uL29 (68 aa).

This sequence belongs to the universal ribosomal protein uL29 family.

The sequence is that of Large ribosomal subunit protein uL29 from Streptococcus pneumoniae (strain JJA).